An 89-amino-acid chain; its full sequence is Large ribosomal subunit protein uL23cz/uL23cy (89 aa).

The protein belongs to the universal ribosomal protein uL23 family. Part of the 50S ribosomal subunit.

Its subcellular location is the plastid. It localises to the chloroplast. Functionally, binds to 23S rRNA. This is Large ribosomal subunit protein uL23cz/uL23cy (rpl23-A) from Calycanthus floridus var. glaucus (Eastern sweetshrub).